A 99-amino-acid polypeptide reads, in one-letter code: PqqA binding protein (99 aa).

Belongs to the PqqD family. As to quaternary structure, monomer. Interacts with PqqE.

It participates in cofactor biosynthesis; pyrroloquinoline quinone biosynthesis. Functionally, functions as a PqqA binding protein and presents PqqA to PqqE, in the pyrroloquinoline quinone (PQQ) biosynthetic pathway. The sequence is that of PqqA binding protein from Acinetobacter baylyi (strain ATCC 33305 / BD413 / ADP1).